A 1004-amino-acid chain; its full sequence is E3 ubiquitin-protein ligase NEDD4-like (1004 aa).

Residues 30–154 (LASHHSRGLE…TEDPTMERPY (125 aa)) form the C2 domain. Disordered regions lie at residues 207–230 (SNDS…WEEK) and 272–407 (AAHR…TPSV). The WW 1 domain maps to 221–254 (PPLPPGWEEKVDNLGRTYYVNHNNRSTQWHRPSL). A Phosphoserine modification is found at Ser341. Thr347 is modified (phosphothreonine). Composition is skewed to polar residues over residues 347-359 (TPDS…SSLI) and 366-376 (RLRSCSVTDTV). Residue Ser371 is modified to Phosphoserine; by WNK1 and WNK4. A Phosphothreonine; by SGK1 modification is found at Thr396. The region spanning 414–447 (PGLPSGWEERKDAKGRTYYVNHNNRTTTWTRPIM) is the WW 2 domain. A disordered region spans residues 453–523 (GASGSATNSN…YNSPKPQHKV (71 aa)). At Ser475 the chain carries Phosphoserine. The residue at position 477 (Ser477) is a Phosphoserine; by SGK1. A phosphoserine mark is found at Ser478, Ser493, Ser504, Ser508, Ser512, and Ser516. Residues 489-500 (GAKDSPIRRAVK) are compositionally biased toward basic and acidic residues. WW domains follow at residues 526–559 (SFLP…DPRL) and 577–610 (GPLP…DPRL). The region spanning 669-1003 (RPDVLKARLW…VENAQGFEGV (335 aa)) is the HECT domain. Cys971 serves as the catalytic Glycyl thioester intermediate.

Interacts with UBE2E3. Interacts with NDFIP1; this interaction activates the E3 ubiquitin-protein ligase. Interacts with NDFIP2; this interaction activates the E3 ubiquitin-protein ligase. Interacts (via WW domains) with SCN1A. Interacts (via WW domains) with SCN2A. Interacts (via WW domains) with SCN3A. Interacts (via WW domains) with SCN5A. Interacts (via WW domains) with SCN8A. Interacts (via WW domains) with SCN9A. Interacts (via WW domains) with SCN10A. Interacts (via WW domains) with CLCN5. Interacts with SMAD2. Interacts with SMAD3. Interacts with SMAD6. Interacts with SMAD7. The phosphorylated form interacts with 14-3-3 proteins. Interacts with TNK2. Interacts with WNK1. Interacts with SGK1. Interacts (via C2 domain) with NPC2. Interacts with ARRDC4. Interacts with KCNQ1; promotes internalization of KCNQ1. Interacts (via domains WW1, 3 and 4) with USP36; the interaction inhibits ubiquitination of, at least, NTRK1, KCNQ2 and KCNQ3 by NEDD4L. Interacts with PRRG4 (via cytoplasmic domain). Interacts with LDLRAD3; the interaction is direct. Interacts with UBE2D2. Interacts with TTYH2 and TTYH3. Phosphorylated; which impairs interaction with SCNN. Interaction with YWHAH inhibits dephosphorylation. Aldosterone induces Ser-477 phosphorylation by SGK1. In terms of processing, auto-ubiquitinated. Deubiquitinated by USP36, no effect on NEDD4L protein levels. Both proteins interact and regulate each other's ubiquitination levels. As to expression, highly expressed in liver and kidney. Also expressed in heart, brain and lung. Isoform 1 is expressed in kidney, lung and gut. Isoform 3 is ubiquitously expressed.

The protein resides in the cytoplasm. The protein localises to the golgi apparatus. Its subcellular location is the endosome. It is found in the multivesicular body. It carries out the reaction S-ubiquitinyl-[E2 ubiquitin-conjugating enzyme]-L-cysteine + [acceptor protein]-L-lysine = [E2 ubiquitin-conjugating enzyme]-L-cysteine + N(6)-ubiquitinyl-[acceptor protein]-L-lysine.. The enzyme catalyses [E2 ubiquitin-conjugating enzyme]-S-ubiquitinyl-L-cysteine + [acceptor protein]-L-cysteine = [E2 ubiquitin-conjugating enzyme]-L-cysteine + [acceptor protein]-S-ubiquitinyl-L-cysteine.. The protein operates within protein modification; protein ubiquitination. With respect to regulation, activated by NDFIP1- and NDFIP2-binding. In terms of biological role, E3 ubiquitin-protein ligase that mediates the polyubiquitination of lysine and cysteine residues on target proteins and is thereby implicated in the regulation of various signaling pathways including autophagy, innate immunity or DNA repair. Inhibits TGF-beta signaling by triggering SMAD2 and TGFBR1 ubiquitination and proteasome-dependent degradation. Downregulates autophagy and cell growth by ubiquitinating and reducing cellular ULK1 or ASCT2 levels. Promotes ubiquitination and internalization of various plasma membrane channels such as ENaC, SCN2A/Nav1.2, SCN3A/Nav1.3, SCN5A/Nav1.5, SCN9A/Nav1.7, SCN10A/Nav1.8, KCNA3/Kv1.3, KCNH2, EAAT1, KCNQ2/Kv7.2, KCNQ3/Kv7.3 or CLC5. Promotes ubiquitination and degradation of SGK1 and TNK2. Ubiquitinates BRAT1 and this ubiquitination is enhanced in the presence of NDFIP1. Plays a role in dendrite formation by melanocytes. Involved in the regulation of TOR signaling. Ubiquitinates and regulates protein levels of NTRK1 once this one is activated by NGF. Plays a role in antiviral innate immunity by catalyzing 'Lys-29'-linked cysteine ubiquitination of TRAF3, resulting in enhanced 'Lys-48' and 'Lys-63'-linked ubiquitination of TRAF3. Ubiquitinates TTYH2 and TYYH3 and regulates protein levels of TTYH2. The sequence is that of E3 ubiquitin-protein ligase NEDD4-like (Nedd4l) from Mus musculus (Mouse).